The primary structure comprises 554 residues: Glucose-6-phosphate isomerase (554 aa).

Glu359 functions as the Proton donor in the catalytic mechanism. Active-site residues include His390 and Lys518.

Belongs to the GPI family.

The protein localises to the cytoplasm. The enzyme catalyses alpha-D-glucose 6-phosphate = beta-D-fructose 6-phosphate. Its pathway is carbohydrate biosynthesis; gluconeogenesis. The protein operates within carbohydrate degradation; glycolysis; D-glyceraldehyde 3-phosphate and glycerone phosphate from D-glucose: step 2/4. Functionally, catalyzes the reversible isomerization of glucose-6-phosphate to fructose-6-phosphate. The protein is Glucose-6-phosphate isomerase of Pseudomonas fluorescens (strain SBW25).